A 154-amino-acid chain; its full sequence is Transcriptional repressor NrdR (154 aa).

A zinc finger lies at 3 to 34 (CPFCRHPDSRVVDSREADEGQAIRRRRSCPEC). The 91-residue stretch at 46 to 136 (LSVVKRSGVT…VYRSFSSAED (91 aa)) folds into the ATP-cone domain.

This sequence belongs to the NrdR family. Zn(2+) is required as a cofactor.

Negatively regulates transcription of bacterial ribonucleotide reductase nrd genes and operons by binding to NrdR-boxes. This chain is Transcriptional repressor NrdR, found in Rhodococcus jostii (strain RHA1).